Consider the following 181-residue polypeptide: ATP synthase subunit delta (181 aa).

It belongs to the ATPase delta chain family. In terms of assembly, F-type ATPases have 2 components, F(1) - the catalytic core - and F(0) - the membrane proton channel. F(1) has five subunits: alpha(3), beta(3), gamma(1), delta(1), epsilon(1). F(0) has three main subunits: a(1), b(2) and c(10-14). The alpha and beta chains form an alternating ring which encloses part of the gamma chain. F(1) is attached to F(0) by a central stalk formed by the gamma and epsilon chains, while a peripheral stalk is formed by the delta and b chains.

The protein resides in the cell inner membrane. In terms of biological role, f(1)F(0) ATP synthase produces ATP from ADP in the presence of a proton or sodium gradient. F-type ATPases consist of two structural domains, F(1) containing the extramembraneous catalytic core and F(0) containing the membrane proton channel, linked together by a central stalk and a peripheral stalk. During catalysis, ATP synthesis in the catalytic domain of F(1) is coupled via a rotary mechanism of the central stalk subunits to proton translocation. Functionally, this protein is part of the stalk that links CF(0) to CF(1). It either transmits conformational changes from CF(0) to CF(1) or is implicated in proton conduction. The polypeptide is ATP synthase subunit delta (Syntrophus aciditrophicus (strain SB)).